Consider the following 193-residue polypeptide: Large ribosomal subunit protein uL18 (193 aa).

Belongs to the universal ribosomal protein uL18 family. As to quaternary structure, part of the 50S ribosomal subunit. Contacts the 5S and 23S rRNAs.

This is one of the proteins that bind and probably mediate the attachment of the 5S RNA into the large ribosomal subunit, where it forms part of the central protuberance. The polypeptide is Large ribosomal subunit protein uL18 (Methanococcus maripaludis (strain DSM 14266 / JCM 13030 / NBRC 101832 / S2 / LL)).